The chain runs to 477 residues: Serine/threonine protein phosphatase 2A 55 kDa regulatory subunit B' delta isoform (477 aa).

The protein belongs to the phosphatase 2A regulatory subunit B56 family. PP2A consists of a common heteromeric enzyme, composed of a catalytic subunit (subunits C), a constant regulatory subunit (subunit A), and a variety of regulatory subunits such as subunits B (the R2/B/PR55/B55, R3/B''/PR72/PR130/PR59 and R5/B'/B56 families). Interacts with SRK2E/OST1. Expressed ubiquitously.

It is found in the cytoplasm. In terms of biological role, the B regulatory subunit may modulate substrate selectivity and catalytic activity, and may also direct the localization of the catalytic enzyme to a particular subcellular compartment. This Arabidopsis thaliana (Mouse-ear cress) protein is Serine/threonine protein phosphatase 2A 55 kDa regulatory subunit B' delta isoform (B'DELTA).